We begin with the raw amino-acid sequence, 293 residues long: Elongation factor Ts (293 aa).

Residues 80-83 (TDFV) are involved in Mg(2+) ion dislocation from EF-Tu.

This sequence belongs to the EF-Ts family.

The protein resides in the cytoplasm. In terms of biological role, associates with the EF-Tu.GDP complex and induces the exchange of GDP to GTP. It remains bound to the aminoacyl-tRNA.EF-Tu.GTP complex up to the GTP hydrolysis stage on the ribosome. The chain is Elongation factor Ts from Enterococcus faecalis (strain ATCC 700802 / V583).